A 550-amino-acid chain; its full sequence is Cytokinin dehydrogenase 10 (550 aa).

The signal sequence occupies residues 1-26 (MMPRAQLTTFLIVTSFLSTVPYLRAP). The 182-residue stretch at 64 to 245 (VHATPNGVFR…TRARIRLEPA (182 aa)) folds into the FAD-binding PCMH-type domain. Positions 100, 101, and 102 each coordinate FAD. The residue at position 103 (His-103) is a Pros-8alpha-FAD histidine. Residues Ser-104, Gln-108, Asp-169, Thr-174, Ser-180, Ile-184, and Ile-235 each coordinate FAD. The N-linked (GlcNAc...) asparagine glycan is linked to Asn-289. Residues Tyr-489, Ser-524, and Gln-527 each coordinate FAD. Positions 523–550 (LSPGQGIFPPPPPPSPPPPAAGEPITAS) are disordered. Over residues 530–543 (FPPPPPPSPPPPAA) the composition is skewed to pro residues.

It belongs to the oxygen-dependent FAD-linked oxidoreductase family. In terms of assembly, monomer. FAD serves as cofactor.

Its subcellular location is the secreted. It is found in the extracellular space. It carries out the reaction N(6)-dimethylallyladenine + A + H2O = 3-methyl-2-butenal + adenine + AH2. Its function is as follows. Catalyzes the oxidation of cytokinins, a family of N(6)-substituted adenine derivatives that are plant hormones, where the substituent is an isopentenyl group. In Oryza sativa subsp. japonica (Rice), this protein is Cytokinin dehydrogenase 10 (CKX10).